Consider the following 520-residue polypeptide: Cytochrome P450 monooxygenase btcC (520 aa).

A helical transmembrane segment spans residues 2 to 22 (IFLLTLAGLKVLSIVILFGII). Residue asparagine 177 is glycosylated (N-linked (GlcNAc...) asparagine). Position 448 (cysteine 448) interacts with heme. Asparagine 511 is a glycosylation site (N-linked (GlcNAc...) asparagine).

This sequence belongs to the cytochrome P450 family. Heme serves as cofactor.

Its subcellular location is the membrane. Its pathway is secondary metabolite biosynthesis; terpenoid biosynthesis. In terms of biological role, cytochrome P4590 monooxygenase part of the gene cluster that mediates the biosynthesis of betaestacins. The bifunctional terpene synthase btcA converts isopentenyl diphosphate (IPP) and dimethylallyl diphosphate (DMAPP) into the sesterterpene betaestacin I. The C-terminal prenyltransferase (PT) domain of btcA catalyzes formation of GFPP, whereas the N-terminal terpene cyclase (TC) domain catalyzes the cyclization of GFPP into betaestacin I. The cytochrome P450 monooxygenase btcB oxidizes the C25 methyl group of betaestacin I to yield the carboxylic acid betaestacin IV via the alcohol betaestacin III. The cytochrome P450 monooxygenase btcC further catalyzes the multistep oxidation of betaestacin IV to produce several compounds, including betaestacins Va, Vb, Vc and VI. The protein is Cytochrome P450 monooxygenase btcC of Colletotrichum orbiculare (strain 104-T / ATCC 96160 / CBS 514.97 / LARS 414 / MAFF 240422) (Cucumber anthracnose fungus).